The following is a 20-amino-acid chain: Phenol-soluble modulin alpha 4 peptide (20 aa).

This sequence belongs to the phenol-soluble modulin alpha peptides family.

Functionally, peptide which can recruit, activate and subsequently lyse neutrophils, thus eliminating the main cellular defense against infection. The polypeptide is Phenol-soluble modulin alpha 4 peptide (psmA4) (Staphylococcus aureus (strain bovine RF122 / ET3-1)).